A 553-amino-acid chain; its full sequence is MALSKSMHARNRYKDKPPDFAYLASKYPDFKQHIQINLNGRVSLNFKDPEAVRALTCTLLREDFGLSIDIPLERLIPTVPLRLNYIHWVEDLIGHQDSDKTTLRRGIDIGTGASCIYPLLGATLNGWYFLATEVDDMCFNYAKKNVEQNNLSDLIKVVKVPQKTLLMDALKEESEIVYDFCMCNPPFFANQLEAKGVNSRNSRRPPPSSVNTGGITEIMAEGGELEFVKRIIHDSLQLKKRLRWYSCMLGKKCSLAPLKEELRIQGVPKVTFTEFCQGRTMRWALAWSFYDDVTVPSPPSKRRKLEKPRKPITFVVLESVMKELSLKASSLGSETAEGIVVVTTWIEKILTDLKVQHKRIPCGREEVSLFLTAIENSWIHLRRKRRERVRQLREVPRAPEDVILALEERKSTPKELSSGQDVAHSPQESALCGLDVPGGEAAADGGHCLSQKLLCQEETPEATEDERDEERGGMEAMESCKGSSNGAQDGEASEKGDRLDGAAGRYLFKCLVNIKKEAGDAVVEMHWVEGQNRDLMNQLCTYVRNQILRLVAS.

Residues 17–20 (PPDF) form an RNA-binding region. 6 residues coordinate S-adenosyl-L-methionine: Arg82, Gly110, Ser114, Glu133, Thr164, and Asn184. Residues 163–167 (KTLLM) form a K-loop region. RNA-binding regions lie at residues 199–211 (SRNSRRPPPSSVN), 250–254 (GKKCS), and 277–283 (QGRTMRW). Residues 289-400 (FYDDVTVPSP…QLREVPRAPE (112 aa)) form a VCR 1 region. Ser329, Ser425, and Ser429 each carry phosphoserine. The interval 457–496 (EETPEATEDERDEERGGMEAMESCKGSSNGAQDGEASEKG) is disordered. Acidic residues predominate over residues 458 to 468 (ETPEATEDERD). Thr463 is subject to Phosphothreonine. The VCR 2 stretch occupies residues 506–553 (YLFKCLVNIKKEAGDAVVEMHWVEGQNRDLMNQLCTYVRNQILRLVAS).

This sequence belongs to the methyltransferase superfamily. METTL16/RlmF family. As to quaternary structure, interacts with MEPCE. Interacts with LARP7.

The protein localises to the nucleus. It is found in the cytoplasm. The catalysed reaction is adenosine in U6 snRNA + S-adenosyl-L-methionine = N(6)-methyladenosine in U6 snRNA + S-adenosyl-L-homocysteine + H(+). The enzyme catalyses an adenosine in mRNA + S-adenosyl-L-methionine = an N(6)-methyladenosine in mRNA + S-adenosyl-L-homocysteine + H(+). With respect to regulation, methyltransferase activity is autoinhibited by the K-loop region that blocks S-adenosyl-L-methionine-binding. Upon activation, K-loop changes conformation, allowing S-adenosyl-L-methionine-binding and subsequent methyltransferase activity. mRNA N6-adenosine-methyltransferase activity is inhibited by zinc. Functionally, RNA N6-methyltransferase that methylates adenosine residues at the N(6) position of a subset of RNAs and is involved in S-adenosyl-L-methionine homeostasis by regulating expression of MAT2A transcripts. Able to N6-methylate a subset of mRNAs and U6 small nuclear RNAs (U6 snRNAs). In contrast to the METTL3-METTL14 heterodimer, only able to methylate a limited number of RNAs: requires both a 5'UACAGAGAA-3' nonamer sequence and a specific RNA structure. Plays a key role in S-adenosyl-L-methionine homeostasis by mediating N6-methylation of MAT2A mRNAs, altering splicing of MAT2A transcripts: in presence of S-adenosyl-L-methionine, binds the 3'-UTR region of MAT2A mRNA and specifically N6-methylates the first hairpin of MAT2A mRNA, preventing recognition of their 3'-splice site by U2AF1/U2AF35, thereby inhibiting splicing and protein production of S-adenosylmethionine synthase. In S-adenosyl-L-methionine-limiting conditions, binds the 3'-UTR region of MAT2A mRNA but stalls due to the lack of a methyl donor, preventing N6-methylation and promoting expression of MAT2A. In addition to mRNAs, also able to mediate N6-methylation of U6 small nuclear RNA (U6 snRNA): specifically N6-methylates adenine in position 43 of U6 snRNAs. Also able to bind various lncRNAs, such as 7SK snRNA (7SK RNA) or 7SL RNA. Specifically binds the 3'-end of the MALAT1 long non-coding RNA. The protein is RNA N(6)-adenosine-methyltransferase METTL16 of Mus musculus (Mouse).